Consider the following 301-residue polypeptide: MSEPVVDTAELSAEEKKRLLRERRQAKMSKGKATARLNNILSQGSSVKTSGVKSVLDQEKEATSSHDDDPEIQDITEITTPPPRTPPIGEDAPQDIDKIFQTMLQQQQQRGQGANTADDPFAQIMKMFNQTEGPDSLINEGSASTQDPTEIKYHQELLEYNTYNQKLWKFRFLLVRVLVTLFNFFYHYTSISDFHASNYAYVRDLSSEEYPVRDFFTWFATSEVVLVAAYYSVFHSLGLFHAANQNSIILKVMSMGSMILPQLESYKPLVARFLGYYELLGIVLGGLSLVIVLFGLLSFAN.

Topologically, residues 1–167 are cytoplasmic; the sequence is MSEPVVDTAE…LEYNTYNQKL (167 aa). Over residues 42–55 the composition is skewed to low complexity; that stretch reads SQGSSVKTSGVKSV. The disordered stretch occupies residues 42-93; that stretch reads SQGSSVKTSGVKSVLDQEKEATSSHDDDPEIQDITEITTPPPRTPPIGEDAP. Basic and acidic residues predominate over residues 56-67; the sequence is LDQEKEATSSHD. A helical membrane pass occupies residues 168–188; sequence WKFRFLLVRVLVTLFNFFYHY. The Lumenal portion of the chain corresponds to 189–214; sequence TSISDFHASNYAYVRDLSSEEYPVRD. A helical membrane pass occupies residues 215–234; that stretch reads FFTWFATSEVVLVAAYYSVF. Topologically, residues 235–278 are cytoplasmic; that stretch reads HSLGLFHAANQNSIILKVMSMGSMILPQLESYKPLVARFLGYYE. Residues 279-299 form a helical membrane-spanning segment; that stretch reads LLGIVLGGLSLVIVLFGLLSF. Over 300-301 the chain is Lumenal; the sequence is AN.

The protein belongs to the GET2 family. As to quaternary structure, component of the Golgi to ER traffic (GET) complex, which is composed of GET1, GET2 and GET3. Within the complex, GET1 and GET2 form a heterotetramer which is stabilized by phosphatidylinositol binding and which binds to the GET3 homodimer.

Its subcellular location is the endoplasmic reticulum membrane. It is found in the golgi apparatus membrane. Its function is as follows. Required for the post-translational delivery of tail-anchored (TA) proteins to the endoplasmic reticulum. Together with GET1, acts as a membrane receptor for soluble GET3, which recognizes and selectively binds the transmembrane domain of TA proteins in the cytosol. The GET complex cooperates with the HDEL receptor ERD2 to mediate the ATP-dependent retrieval of resident ER proteins that contain a C-terminal H-D-E-L retention signal from the Golgi to the ER. In Candida dubliniensis (strain CD36 / ATCC MYA-646 / CBS 7987 / NCPF 3949 / NRRL Y-17841) (Yeast), this protein is Golgi to ER traffic protein 2.